A 188-amino-acid chain; its full sequence is Ribosome-recycling factor (188 aa).

Belongs to the RRF family.

The protein localises to the cytoplasm. In terms of biological role, responsible for the release of ribosomes from messenger RNA at the termination of protein biosynthesis. May increase the efficiency of translation by recycling ribosomes from one round of translation to another. The chain is Ribosome-recycling factor from Cereibacter sphaeroides (strain ATCC 17025 / ATH 2.4.3) (Rhodobacter sphaeroides).